The chain runs to 175 residues: Translation initiation factor IF-3 (175 aa).

It belongs to the IF-3 family. Monomer.

Its subcellular location is the cytoplasm. IF-3 binds to the 30S ribosomal subunit and shifts the equilibrium between 70S ribosomes and their 50S and 30S subunits in favor of the free subunits, thus enhancing the availability of 30S subunits on which protein synthesis initiation begins. This chain is Translation initiation factor IF-3, found in Chromobacterium violaceum (strain ATCC 12472 / DSM 30191 / JCM 1249 / CCUG 213 / NBRC 12614 / NCIMB 9131 / NCTC 9757 / MK).